The following is a 329-amino-acid chain: Ribosomal RNA small subunit methyltransferase C (329 aa).

It belongs to the methyltransferase superfamily. RsmC family. Monomer.

The protein resides in the cytoplasm. It catalyses the reaction guanosine(1207) in 16S rRNA + S-adenosyl-L-methionine = N(2)-methylguanosine(1207) in 16S rRNA + S-adenosyl-L-homocysteine + H(+). In terms of biological role, specifically methylates the guanine in position 1207 of 16S rRNA in the 30S particle. This Actinobacillus pleuropneumoniae serotype 7 (strain AP76) protein is Ribosomal RNA small subunit methyltransferase C.